A 108-amino-acid chain; its full sequence is Small ribosomal subunit protein uS10 (108 aa).

This sequence belongs to the universal ribosomal protein uS10 family. Part of the 30S ribosomal subunit.

In terms of biological role, involved in the binding of tRNA to the ribosomes. The chain is Small ribosomal subunit protein uS10 from Mycoplasma pneumoniae (strain ATCC 29342 / M129 / Subtype 1) (Mycoplasmoides pneumoniae).